The sequence spans 340 residues: Trimethylamine N-oxide transport system ATP-binding protein TmoW (340 aa).

The ABC transporter domain occupies 32–268 (GRSFDDIRAD…PTTGYVAKFT (237 aa)). 64 to 71 (GLSGSGKS) contacts ATP.

This sequence belongs to the ABC transporter superfamily. The complex is probably composed of two ATP-binding proteins (TmoW), two transmembrane proteins (TmoV) and a solute-binding protein (TmoX).

The protein resides in the cell inner membrane. It carries out the reaction a quaternary ammonium(out) + ATP + H2O = a quaternary ammonium(in) + ADP + phosphate + H(+). In terms of biological role, part of the ABC transporter complex TmoXWV involved in trimethylamine N-oxide (TMAO) import. Responsible for energy coupling to the transport system. Is specific for TMAO and essential for TMAO metabolism. The polypeptide is Trimethylamine N-oxide transport system ATP-binding protein TmoW (Ruegeria pomeroyi (strain ATCC 700808 / DSM 15171 / DSS-3) (Silicibacter pomeroyi)).